A 208-amino-acid polypeptide reads, in one-letter code: Outer-membrane lipoprotein LolB (208 aa).

The signal sequence occupies residues 1–21 (MLSSKRRLMRLLPLASLLLTA). The N-palmitoyl cysteine moiety is linked to residue C22. The S-diacylglycerol cysteine moiety is linked to residue C22.

Belongs to the LolB family. As to quaternary structure, monomer.

The protein resides in the cell outer membrane. In terms of biological role, plays a critical role in the incorporation of lipoproteins in the outer membrane after they are released by the LolA protein. The protein is Outer-membrane lipoprotein LolB of Erwinia tasmaniensis (strain DSM 17950 / CFBP 7177 / CIP 109463 / NCPPB 4357 / Et1/99).